The chain runs to 173 residues: Large ribosomal subunit protein uL10 (173 aa).

This sequence belongs to the universal ribosomal protein uL10 family. As to quaternary structure, part of the ribosomal stalk of the 50S ribosomal subunit. The N-terminus interacts with L11 and the large rRNA to form the base of the stalk. The C-terminus forms an elongated spine to which L12 dimers bind in a sequential fashion forming a multimeric L10(L12)X complex.

Its function is as follows. Forms part of the ribosomal stalk, playing a central role in the interaction of the ribosome with GTP-bound translation factors. The protein is Large ribosomal subunit protein uL10 of Nitratidesulfovibrio vulgaris (strain ATCC 29579 / DSM 644 / CCUG 34227 / NCIMB 8303 / VKM B-1760 / Hildenborough) (Desulfovibrio vulgaris).